The primary structure comprises 330 residues: MDGPMRPRSASLVDFQFGVVATETIEDALLHLAQQNEQAVREASGRLGRFREPQIVEFVFLLSEQWCLEKSVSYQAVEILERFMVKQAENICRQATIQPRDNKRESQNWRALKQQLVNKFTLRLVSCVQLASKLSFRNKIISNITVLNFLQALGYLHTKEELLESELDVLKSLNFRINLPTPLAYVETLLEVLGYNGCLVPAMRLHATCLTLLDLVYLLHEPIYESLLRASIENSTPSQLQGEKFTSVKEDFMLLAVGIIAASAFIQNHECWSQVVGHLQSITGIALASIAEFSYAILTHGVGANTPGRQQSIPPHLAARALKTVASSNT.

The region spanning 27-178 (DALLHLAQQN…VLKSLNFRIN (152 aa)) is the Cyclin N-terminal domain.

In terms of assembly, interacts with PRR19; this interaction promotes crossover formation. Interacts with RFC3 and RFC4; these interactions facilitate crossover formation. Interacts with CDC34; this interaction regulates the cell-cycle progression.

Its subcellular location is the nucleus. It is found in the cytoplasm. The protein resides in the chromosome. Functionally, plays a role in the different steps of crossover formation during meiotic recombination. Participates in the crossover differentiation step of crossover-specific recombination intermediates through its interaction with PRR19. In addition, stimulates crossover formation through the interactions with RFC3 and RFC4 and simultaneously regulates cell-cycle progression through interactions with CDC34 and subsequent ubiquitination of WEE1. May also participates in an active deselection process that destabilizes or removes excess pre-CO intermediates. The chain is Cyclin N-terminal domain-containing protein 1 from Homo sapiens (Human).